The chain runs to 158 residues: Probable cyclic pyranopterin monophosphate synthase (158 aa).

Substrate contacts are provided by residues 75–77 and 111–112; these read MCH and ME. Residue Asp126 is part of the active site.

It belongs to the MoaC family. Homohexamer; trimer of dimers.

It carries out the reaction (8S)-3',8-cyclo-7,8-dihydroguanosine 5'-triphosphate = cyclic pyranopterin phosphate + diphosphate. It participates in cofactor biosynthesis; molybdopterin biosynthesis. Its function is as follows. Catalyzes the conversion of (8S)-3',8-cyclo-7,8-dihydroguanosine 5'-triphosphate to cyclic pyranopterin monophosphate (cPMP). The chain is Probable cyclic pyranopterin monophosphate synthase from Methanocorpusculum labreanum (strain ATCC 43576 / DSM 4855 / Z).